The primary structure comprises 277 residues: Putative acetylornithine deacetylase (277 aa).

It carries out the reaction N(2)-acetyl-L-ornithine + H2O = L-ornithine + acetate. It participates in amino-acid biosynthesis; L-arginine biosynthesis; L-ornithine from N(2)-acetyl-L-ornithine (linear): step 1/1. In Leptospira biflexa, this protein is Putative acetylornithine deacetylase (argE).